Reading from the N-terminus, the 329-residue chain is Aspartate carbamoyltransferase catalytic subunit (329 aa).

Residues R63 and T64 each coordinate carbamoyl phosphate. K91 provides a ligand contact to L-aspartate. The carbamoyl phosphate site is built by R113, H141, and Q144. Positions 179 and 234 each coordinate L-aspartate. 2 residues coordinate carbamoyl phosphate: G275 and P276.

Belongs to the aspartate/ornithine carbamoyltransferase superfamily. ATCase family. In terms of assembly, heterododecamer (2C3:3R2) of six catalytic PyrB chains organized as two trimers (C3), and six regulatory PyrI chains organized as three dimers (R2).

The enzyme catalyses carbamoyl phosphate + L-aspartate = N-carbamoyl-L-aspartate + phosphate + H(+). The protein operates within pyrimidine metabolism; UMP biosynthesis via de novo pathway; (S)-dihydroorotate from bicarbonate: step 2/3. Functionally, catalyzes the condensation of carbamoyl phosphate and aspartate to form carbamoyl aspartate and inorganic phosphate, the committed step in the de novo pyrimidine nucleotide biosynthesis pathway. The sequence is that of Aspartate carbamoyltransferase catalytic subunit from Magnetococcus marinus (strain ATCC BAA-1437 / JCM 17883 / MC-1).